Reading from the N-terminus, the 164-residue chain is Large ribosomal subunit protein uL10 (164 aa).

It belongs to the universal ribosomal protein uL10 family. In terms of assembly, part of the ribosomal stalk of the 50S ribosomal subunit. The N-terminus interacts with L11 and the large rRNA to form the base of the stalk. The C-terminus forms an elongated spine to which L12 dimers bind in a sequential fashion forming a multimeric L10(L12)X complex.

Forms part of the ribosomal stalk, playing a central role in the interaction of the ribosome with GTP-bound translation factors. This is Large ribosomal subunit protein uL10 from Aliivibrio fischeri (strain MJ11) (Vibrio fischeri).